We begin with the raw amino-acid sequence, 242 residues long: Protein HTATIP2 (242 aa).

Ala-2 bears the N-acetylalanine mark. Residues Ala-2–Gly-25 are required for interaction with elongation factor EEF1A1. 12 residues coordinate NADPH: Ser-27, Gly-28, Glu-29, Thr-30, Arg-52, Arg-53, Leu-92, Gly-93, Tyr-143, Lys-147, Leu-170, and Arg-178. The active-site Proton acceptor is the Tyr-143. Residue Lys-147 is part of the active site.

As to quaternary structure, monomer. Forms homodimers during oxidative stress. Interacts (via N-terminus) with elongation factor EEF1A1 (via middle-region); the interaction is direct and competes with EEF1A1 binding to guanyl-nucleotide exchange factor EEF1B2, thereby inhibiting GDP for GTP exchange and reactivation of EEF1A1. Interacts with nuclear transport receptors XPO4, IPO5/RANBP5, IPO7, IPO9 and KPNB1 as well as GCN1L1/GCN1 and LRPPRC probably through their HEAT repeats. Binds NCOA5/CIA.

Its subcellular location is the cytoplasm. In terms of biological role, represses translation by preventing reactivation of elongation factor eEF1A. May also inhibit nuclear import by competing with nuclear import substrates for binding to a subset of nuclear transport receptors. Has additionally been proposed to act as a redox sensor involved in cellular oxidative stress surveillance. This is Protein HTATIP2 (HTATIP2) from Pongo pygmaeus (Bornean orangutan).